The following is a 250-amino-acid chain: Ferritin, chloroplastic (250 aa).

A chloroplast-targeting transit peptide spans 1 to 49 (MALAPSKVSTFSGFSPKPSVGGAQKNPTCSVSLSFLNEKLGSRNLRVCA). Residues 50-82 (STVPLTGVIFEPFEEVKKSELAVPTAPQVSLAR) form an extension peptide (EP) region. A Ferritin-like diiron domain is found at 83–236 (QNYADECESA…EYVAQLRRVG (154 aa)). The Fe cation site is built by Glu100, Glu135, His138, Glu184, and Gln218.

This sequence belongs to the ferritin family. In terms of assembly, oligomer of 24 subunits. There are two types of subunits: L (light) chain and H (heavy) chain. The major chain can be light or heavy, depending on the species and tissue type. The functional molecule forms a roughly spherical shell with a diameter of 12 nm and contains a central cavity into which the insoluble mineral iron core is deposited.

It is found in the plastid. It localises to the chloroplast. It carries out the reaction 4 Fe(2+) + O2 + 4 H(+) = 4 Fe(3+) + 2 H2O. Its function is as follows. Stores iron in a soluble, non-toxic, readily available form. Important for iron homeostasis. Has ferroxidase activity. Iron is taken up in the ferrous form and deposited as ferric hydroxides after oxidation. In Malus baccata var. xiaojinensis (Apple), this protein is Ferritin, chloroplastic.